Consider the following 291-residue polypeptide: Translocon-associated protein subunit alpha (291 aa).

A signal peptide spans 1 to 20 (MRLLPRLLLLLLLVFPATVL). At 21–207 (FRGGPRGSLA…EREDGLDGET (187 aa)) the chain is on the lumenal side. A disordered region spans residues 34–83 (DLTEDEETVEDSIIEDEDDEAEVEEDEPTDLVEDKEEEDVSGEPEASPSA). Over residues 35 to 75 (LTEDEETVEDSIIEDEDDEAEVEEDEPTDLVEDKEEEDVSG) the composition is skewed to acidic residues. Residues Asn-136 and Asn-191 are each glycosylated (N-linked (GlcNAc...) asparagine). Residues 208-228 (IFMYMFLAGLGLLVIVGLHQL) form a helical membrane-spanning segment. Residues 229–291 (LESRKRKRPV…AQKRSVGSDE (63 aa)) lie on the Cytoplasmic side of the membrane. The residue at position 247 (Ser-247) is a Phosphoserine. Position 260 is a phosphothreonine (Thr-260). Residues 263 to 291 (QIMQSRRDKASPRRLPRKRAQKRSVGSDE) are disordered. At Ser-273 the chain carries Phosphoserine. Residues 274–284 (PRRLPRKRAQK) show a composition bias toward basic residues.

This sequence belongs to the TRAP-alpha family. As to quaternary structure, heterotetramer of TRAP-alpha, TRAP-beta, TRAP-delta and TRAP-gamma. Interacts with palmitoylated calnexin (CALX), the interaction is required for efficient folding of glycosylated proteins. In terms of processing, phosphorylated in its cytoplasmic tail.

The protein resides in the endoplasmic reticulum membrane. Its function is as follows. TRAP proteins are part of a complex whose function is to bind calcium to the ER membrane and thereby regulate the retention of ER resident proteins. May be involved in the recycling of the translocation apparatus after completion of the translocation process or may function as a membrane-bound chaperone facilitating folding of translocated proteins. This chain is Translocon-associated protein subunit alpha (SSR1), found in Pongo abelii (Sumatran orangutan).